The chain runs to 130 residues: Small ribosomal subunit protein uS8 (130 aa).

This sequence belongs to the universal ribosomal protein uS8 family. Part of the 30S ribosomal subunit. Contacts proteins S5 and S12.

Its function is as follows. One of the primary rRNA binding proteins, it binds directly to 16S rRNA central domain where it helps coordinate assembly of the platform of the 30S subunit. In Coxiella burnetii (strain Dugway 5J108-111), this protein is Small ribosomal subunit protein uS8.